The sequence spans 618 residues: uncharacterized protein (618 aa).

To Rhizobium NGR234A y4qD.

This is an uncharacterized protein from Sinorhizobium fredii (strain NBRC 101917 / NGR234).